The primary structure comprises 650 residues: Sterol O-acyltransferase 2 (650 aa).

The interval 41–79 (LTSSNNSCASEHEGEGEGEDERPATTSSAPTQNHSAGDV) is disordered. Positions 64–75 (ATTSSAPTQNHS) are enriched in polar residues. Helical transmembrane passes span 223 to 243 (FSGL…KALI), 300 to 320 (TGWA…MYLT), 412 to 432 (INVS…QIEY), 450 to 470 (IFGT…PVAM), and 493 to 513 (LLVD…YLIW). An FYXDWWN motif motif is present at residues 531-537 (FYGDWWN). 2 consecutive transmembrane segments (helical) span residues 575-595 (ATLM…YVIF) and 630-650 (VIFW…YLTF). H587 is an active-site residue.

Belongs to the membrane-bound acyltransferase family. Sterol o-acyltransferase subfamily.

The protein resides in the endoplasmic reticulum membrane. Functionally, sterol O-acyltransferase that catalyzes the formation of stery esters. In Saccharomyces uvarum (strain ATCC 76518 / CBS 7001 / CLIB 283 / NBRC 10550 / MCYC 623 / NCYC 2669 / NRRL Y-11845) (Yeast), this protein is Sterol O-acyltransferase 2 (ARE2).